We begin with the raw amino-acid sequence, 279 residues long: Energy-coupling factor transporter ATP-binding protein EcfA1 (279 aa).

One can recognise an ABC transporter domain in the interval Ile-5–Asp-240. Residue Gly-40–Ser-47 coordinates ATP.

This sequence belongs to the ABC transporter superfamily. Energy-coupling factor EcfA family. In terms of assembly, forms a stable energy-coupling factor (ECF) transporter complex composed of 2 membrane-embedded substrate-binding proteins (S component), 2 ATP-binding proteins (A component) and 2 transmembrane proteins (T component).

The protein resides in the cell membrane. In terms of biological role, ATP-binding (A) component of a common energy-coupling factor (ECF) ABC-transporter complex. Unlike classic ABC transporters this ECF transporter provides the energy necessary to transport a number of different substrates. The protein is Energy-coupling factor transporter ATP-binding protein EcfA1 of Streptococcus pyogenes serotype M5 (strain Manfredo).